Consider the following 141-residue polypeptide: Large ribosomal subunit protein uL11 (141 aa).

The protein belongs to the universal ribosomal protein uL11 family. Part of the ribosomal stalk of the 50S ribosomal subunit. Interacts with L10 and the large rRNA to form the base of the stalk. L10 forms an elongated spine to which L12 dimers bind in a sequential fashion forming a multimeric L10(L12)X complex. Post-translationally, one or more lysine residues are methylated.

In terms of biological role, forms part of the ribosomal stalk which helps the ribosome interact with GTP-bound translation factors. The chain is Large ribosomal subunit protein uL11 from Carboxydothermus hydrogenoformans (strain ATCC BAA-161 / DSM 6008 / Z-2901).